Consider the following 683-residue polypeptide: Multidrug resistance protein MdtO (683 aa).

The next 9 membrane-spanning stretches (helical) occupy residues 43–63 (VILISMTFEIPFVALSLAVLF), 75–95 (FVAILFVVATVLEIGSLFLIY), 100–120 (GEPLIRLIIAGPILMGCMFLM), 125–145 (LGLVFFAVAIVAIYGQTFPAM), 158–178 (WCIVVGLYPTLLMTLIGVLWF), 402–422 (FGGAFCGAILALLFTLLVMPW), 426–446 (IVELLFVLAPIFLLGAWIATS), 457–477 (MVVTFALATLENVFGPVYDLV), and 483–503 (ALGIIIGTVVSAVIYTFVWPE).

It belongs to the MdtO family. Could be part of a tripartite efflux system composed of MdtN, MdtO and MdtP.

The protein resides in the cell inner membrane. Functionally, could be involved in resistance to puromycin, acriflavine and tetraphenylarsonium chloride. This Escherichia coli (strain K12) protein is Multidrug resistance protein MdtO (mdtO).